Reading from the N-terminus, the 211-residue chain is Thiamine-phosphate synthase (211 aa).

4-amino-2-methyl-5-(diphosphooxymethyl)pyrimidine is bound by residues 37–41 (QLRIK) and Asn69. Residues Asp70 and Asp89 each coordinate Mg(2+). Residue Ser108 participates in 4-amino-2-methyl-5-(diphosphooxymethyl)pyrimidine binding. A 2-[(2R,5Z)-2-carboxy-4-methylthiazol-5(2H)-ylidene]ethyl phosphate-binding site is contributed by 134–136 (TQT). 4-amino-2-methyl-5-(diphosphooxymethyl)pyrimidine is bound at residue Lys137. Residues Gly166 and 186 to 187 (VS) each bind 2-[(2R,5Z)-2-carboxy-4-methylthiazol-5(2H)-ylidene]ethyl phosphate.

This sequence belongs to the thiamine-phosphate synthase family. The cofactor is Mg(2+).

The enzyme catalyses 2-[(2R,5Z)-2-carboxy-4-methylthiazol-5(2H)-ylidene]ethyl phosphate + 4-amino-2-methyl-5-(diphosphooxymethyl)pyrimidine + 2 H(+) = thiamine phosphate + CO2 + diphosphate. It catalyses the reaction 2-(2-carboxy-4-methylthiazol-5-yl)ethyl phosphate + 4-amino-2-methyl-5-(diphosphooxymethyl)pyrimidine + 2 H(+) = thiamine phosphate + CO2 + diphosphate. The catalysed reaction is 4-methyl-5-(2-phosphooxyethyl)-thiazole + 4-amino-2-methyl-5-(diphosphooxymethyl)pyrimidine + H(+) = thiamine phosphate + diphosphate. It participates in cofactor biosynthesis; thiamine diphosphate biosynthesis; thiamine phosphate from 4-amino-2-methyl-5-diphosphomethylpyrimidine and 4-methyl-5-(2-phosphoethyl)-thiazole: step 1/1. Functionally, condenses 4-methyl-5-(beta-hydroxyethyl)thiazole monophosphate (THZ-P) and 2-methyl-4-amino-5-hydroxymethyl pyrimidine pyrophosphate (HMP-PP) to form thiamine monophosphate (TMP). This is Thiamine-phosphate synthase from Salmonella choleraesuis (strain SC-B67).